Reading from the N-terminus, the 128-residue chain is MTTSSYFLLVTLGLLLYVCRSSFGTEHTCESDASPHPQGVCGSPLAEAVEAACELEEYLQGGTGKKRGRASPLRKRRAFLSMLKARAKRNEASPLQRSGRGIVCECCKNHCNIEELTEYCPPVTEGSG.

A signal peptide spans 1-24 (MTTSSYFLLVTLGLLLYVCRSSFG). 4 cysteine pairs are disulfide-bonded: cysteine 29–cysteine 104, cysteine 41–cysteine 107, cysteine 53–cysteine 120, and cysteine 106–cysteine 111. Residues 59–89 (LQGGTGKKRGRASPLRKRRAFLSMLKARAKR) constitute a propeptide, c peptide. Glutamate 115 is subject to 4-carboxyglutamate; partial. Serine amide is present on serine 127.

The protein belongs to the insulin family. As to quaternary structure, heterodimer of A and B chains; disulfide-linked. As to expression, expressed by the venom gland.

The protein resides in the secreted. Its function is as follows. This venom insulin facilitates prey capture by rapidly inducing hypoglycemic shock. Intraperitoneal injection of this peptide into zebrafish lowers blood glucose with the same potency than human insulin. In vivo, when applied to water, this peptide reduces overall locomotor activity of zebrafish larvae, observed as a significant decrease in the percentage of time spent swimming and movement frequency. In Conus floridulus (Cone snail), this protein is Con-Ins F1.